Reading from the N-terminus, the 298-residue chain is Acetylglutamate kinase (298 aa).

Residues 69–70 (GG), arginine 91, and asparagine 191 contribute to the substrate site.

It belongs to the acetylglutamate kinase family. ArgB subfamily.

It localises to the cytoplasm. The catalysed reaction is N-acetyl-L-glutamate + ATP = N-acetyl-L-glutamyl 5-phosphate + ADP. The protein operates within amino-acid biosynthesis; L-arginine biosynthesis; N(2)-acetyl-L-ornithine from L-glutamate: step 2/4. Functionally, catalyzes the ATP-dependent phosphorylation of N-acetyl-L-glutamate. This chain is Acetylglutamate kinase, found in Neisseria gonorrhoeae (strain ATCC 700825 / FA 1090).